Here is a 720-residue protein sequence, read N- to C-terminus: MAPPRNVVKIAVQMSDAIPQLIQLDQAKPLATVLKEVCDAWSLTHPEHYALQFADGHRKYITENNRLEIKNGSILCLSTAPDLKAQQLLGRLQNTSREGCCEVLRNLVLLASDMTFAQEVISRDGLQKLSTIIENGDDLGEMLALGLRAFLELMEHGVVSWETLSISFVRKVISYVNMNLMDASVQPLALRLLESVTLSSPALGQLVKSEVPLDRLLVHLQVMNHQLQTKAMALLTALLQGASPTERKEMLDHLWKKNLRQFIYKNIIHSATPMGDEMAHHLYVLQALTLGLLEPRMRTPLDPYSQEQRDQLQALRQAAFEPEGESLGTGLSADRRRSLCVREFRKLGFSNSNPAQDLERVPPGLLALDNMLYFSRHAPSAYSRFVLENSSREDKHECPFARSSIQLTALLCELLRVGEPCSETAQDFSPMFFSQDHSFHELFCVAIQLLNKTWKEMRATQEDFDKVMQVVREQLARTLALKPTSLELFRTKVNALTYGEVLRLRQTERLHQEGTLAPPILELREKLKPELMGLIRQQRLLRLCEGMLFRKISSRRRQDKLWFCCLSPNHKVLQYGDVEEGAKPPTLESLPEQLPVADIRALLMGKDCPHVREKGSGKQNKDLYELAFSISYDHGEEEAYLNFIAPSKRDFYLWTDGLSALLGSTMGSELTRLDLEQLLTMETKLRLLELENVPIPEQPPPVPPPPTNFNFCYDYSITEP.

In terms of domain architecture, ELMO spans 307–479; sequence EQRDQLQALR…VVREQLARTL (173 aa). One can recognise a PH domain in the interval 542–664; the sequence is RLCEGMLFRK…TDGLSALLGS (123 aa). An SH3-binding motif is present at residues 696–706; sequence PEQPPPVPPPP.

As to quaternary structure, probably interacts directly with the SH3-domain of DOCK1 via its SH3-binding site. Part of a complex with DOCK1 and RAC1. Interacts with ADGRB3.

The protein localises to the cytoplasm. Its function is as follows. Involved in cytoskeletal rearrangements required for phagocytosis of apoptotic cells and cell motility. Acts in association with DOCK1 and CRK. Was initially proposed to be required in complex with DOCK1 to activate Rac Rho small GTPases. May enhance the guanine nucleotide exchange factor (GEF) activity of DOCK1. This Mus musculus (Mouse) protein is Engulfment and cell motility protein 3 (Elmo3).